Consider the following 348-residue polypeptide: L-asparaginase 2 (348 aa).

An N-terminal signal peptide occupies residues 1 to 22 (MEFFKKTALAALVMGFSGAALA). The Asparaginase/glutaminase domain occupies 24–348 (PNITILATGG…QQIQQIFNQY (325 aa)). Residue threonine 34 is the O-isoaspartyl threonine intermediate of the active site. Substrate is bound by residues 80 to 81 (SQ) and 111 to 112 (TD). A disulfide bond links cysteine 99 and cysteine 127.

This sequence belongs to the asparaginase 1 family. Homotetramer.

The protein resides in the periplasm. It carries out the reaction L-asparagine + H2O = L-aspartate + NH4(+). The protein is L-asparaginase 2 (ansB) of Escherichia coli (strain K12).